A 251-amino-acid polypeptide reads, in one-letter code: Triosephosphate isomerase (251 aa).

9–11 is a substrate binding site; sequence NWK. Residue His95 is the Electrophile of the active site. Residue Glu167 is the Proton acceptor of the active site. Substrate-binding positions include Gly173, Ser213, and 234–235; that span reads GG. Ser213 is subject to Phosphoserine.

It belongs to the triosephosphate isomerase family. Homodimer.

The protein resides in the cytoplasm. The enzyme catalyses D-glyceraldehyde 3-phosphate = dihydroxyacetone phosphate. It functions in the pathway carbohydrate biosynthesis; gluconeogenesis. Its pathway is carbohydrate degradation; glycolysis; D-glyceraldehyde 3-phosphate from glycerone phosphate: step 1/1. Involved in the gluconeogenesis. Catalyzes stereospecifically the conversion of dihydroxyacetone phosphate (DHAP) to D-glyceraldehyde-3-phosphate (G3P). The sequence is that of Triosephosphate isomerase from Shouchella clausii (strain KSM-K16) (Alkalihalobacillus clausii).